Here is a 492-residue protein sequence, read N- to C-terminus: Catalase-4 (492 aa).

Residues H65 and N138 contribute to the active site. Position 348 (Y348) interacts with heme.

This sequence belongs to the catalase family. Homotetramer. The cofactor is heme.

The protein resides in the peroxisome. Its subcellular location is the glyoxysome. The catalysed reaction is 2 H2O2 = O2 + 2 H2O. Its function is as follows. Occurs in almost all aerobically respiring organisms and serves to protect cells from the toxic effects of hydrogen peroxide. In Glycine max (Soybean), this protein is Catalase-4 (CAT4).